The chain runs to 208 residues: 3-demethoxyubiquinol 3-hydroxylase (208 aa).

Fe cation-binding residues include Glu57, Glu87, His90, Glu139, Glu171, and His174.

It belongs to the COQ7 family. It depends on Fe cation as a cofactor.

Its subcellular location is the cell membrane. The enzyme catalyses a 5-methoxy-2-methyl-3-(all-trans-polyprenyl)benzene-1,4-diol + AH2 + O2 = a 3-demethylubiquinol + A + H2O. It functions in the pathway cofactor biosynthesis; ubiquinone biosynthesis. In terms of biological role, catalyzes the hydroxylation of 2-nonaprenyl-3-methyl-6-methoxy-1,4-benzoquinol during ubiquinone biosynthesis. The polypeptide is 3-demethoxyubiquinol 3-hydroxylase (Burkholderia pseudomallei (strain 668)).